Reading from the N-terminus, the 252-residue chain is Small ribosomal subunit protein uS3 (252 aa).

One can recognise a KH type-2 domain in the interval 39–110 (IRKALMKELK…EVKINVVEIK (72 aa)). The interval 218-252 (TSDEKPKFEKRDFNRSNNNRRDQAPKSHPVAKEAK) is disordered. Over residues 219–252 (SDEKPKFEKRDFNRSNNNRRDQAPKSHPVAKEAK) the composition is skewed to basic and acidic residues.

Belongs to the universal ribosomal protein uS3 family. In terms of assembly, part of the 30S ribosomal subunit. Forms a tight complex with proteins S10 and S14.

Its function is as follows. Binds the lower part of the 30S subunit head. Binds mRNA in the 70S ribosome, positioning it for translation. This chain is Small ribosomal subunit protein uS3, found in Spiroplasma citri.